We begin with the raw amino-acid sequence, 384 residues long: 23S rRNA (uracil(747)-C(5))-methyltransferase RlmC (384 aa).

Residues Cys3, Cys11, Cys14, and Cys87 each contribute to the [4Fe-4S] cluster site. Gln212, Phe241, Glu262, and Asn309 together coordinate S-adenosyl-L-methionine. Cys336 functions as the Nucleophile in the catalytic mechanism.

Belongs to the class I-like SAM-binding methyltransferase superfamily. RNA M5U methyltransferase family. RlmC subfamily.

The catalysed reaction is uridine(747) in 23S rRNA + S-adenosyl-L-methionine = 5-methyluridine(747) in 23S rRNA + S-adenosyl-L-homocysteine + H(+). Its function is as follows. Catalyzes the formation of 5-methyl-uridine at position 747 (m5U747) in 23S rRNA. This is 23S rRNA (uracil(747)-C(5))-methyltransferase RlmC from Shewanella amazonensis (strain ATCC BAA-1098 / SB2B).